We begin with the raw amino-acid sequence, 385 residues long: Transcription termination factor 2, mitochondrial (385 aa).

Residues 1–35 constitute a mitochondrion transit peptide; the sequence is MLWKLLLRSQSCRLCSFRKMRSPPKYRPFLACFTY.

It belongs to the mTERF family. Monomer. In terms of tissue distribution, expressed in skeletal muscle, heart, liver and pancreas.

Its subcellular location is the mitochondrion. It is found in the mitochondrion matrix. The protein resides in the mitochondrion nucleoid. In terms of biological role, binds mitochondrial DNA and plays a role in the regulation of transcription of mitochondrial mRNA and rRNA species. This is Transcription termination factor 2, mitochondrial (MTERF2) from Homo sapiens (Human).